A 41-amino-acid chain; its full sequence is Photosystem I reaction center subunit IX (41 aa).

Residues tyrosine 7–isoleucine 27 form a helical membrane-spanning segment.

The protein belongs to the PsaJ family.

It is found in the plastid. It localises to the chloroplast thylakoid membrane. May help in the organization of the PsaE and PsaF subunits. The protein is Photosystem I reaction center subunit IX of Tetradesmus obliquus (Green alga).